A 426-amino-acid chain; its full sequence is Tyrosine--tRNA ligase (426 aa).

Tyr-38 is a binding site for L-tyrosine. Positions 43-52 (PTADSLHIGS) match the 'HIGH' region motif. L-tyrosine is bound by residues Tyr-176 and Gln-180. A 'KMSKS' region motif is present at residues 236 to 240 (KFGKT). Lys-239 is an ATP binding site. In terms of domain architecture, S4 RNA-binding spans 359-426 (QTIVEVLTQS…KKLFNLYIWK (68 aa)).

This sequence belongs to the class-I aminoacyl-tRNA synthetase family. TyrS type 1 subfamily. In terms of assembly, homodimer.

It localises to the cytoplasm. The enzyme catalyses tRNA(Tyr) + L-tyrosine + ATP = L-tyrosyl-tRNA(Tyr) + AMP + diphosphate + H(+). Its function is as follows. Catalyzes the attachment of tyrosine to tRNA(Tyr) in a two-step reaction: tyrosine is first activated by ATP to form Tyr-AMP and then transferred to the acceptor end of tRNA(Tyr). The polypeptide is Tyrosine--tRNA ligase (Aliivibrio salmonicida (strain LFI1238) (Vibrio salmonicida (strain LFI1238))).